A 186-amino-acid polypeptide reads, in one-letter code: MVASRDTAWLLVGQVVAAHGLRGWLRVKCWSDFPERLTEPGPRWLQRDSDPEPLLHPLIEGQFFPAKGLYLVRLEGIPDRTAAEAWVGAKVLVPASQRLPLEPEEYHYSDLIGLAVYHQGRLLGHVSAIWAAGQDVLEIATPDKRQVLIPFVKALVPVVDLEKGELQVQPPPGLVESFLGQDRARN.

Residues Pro103 to Leu174 enclose the PRC barrel domain.

This sequence belongs to the RimM family. As to quaternary structure, binds ribosomal protein uS19.

Its subcellular location is the cytoplasm. Functionally, an accessory protein needed during the final step in the assembly of 30S ribosomal subunit, possibly for assembly of the head region. Essential for efficient processing of 16S rRNA. May be needed both before and after RbfA during the maturation of 16S rRNA. It has affinity for free ribosomal 30S subunits but not for 70S ribosomes. This Synechococcus sp. (strain JA-3-3Ab) (Cyanobacteria bacterium Yellowstone A-Prime) protein is Ribosome maturation factor RimM.